A 569-amino-acid polypeptide reads, in one-letter code: Endonuclease/exonuclease/phosphatase family domain-containing protein 1 (569 aa).

Positions M1–H20 are disordered. Residue G2 is the site of N-myristoyl glycine attachment. Residues I11–H20 show a composition bias toward basic and acidic residues. Residues S16, S21, and S25 each carry the phosphoserine modification. The 30-residue stretch at E38–Y67 folds into the HhH domain. Phosphoserine is present on residues S106, S110, S160, and S173. The segment at S200–S225 is disordered. Residues P202–L211 are compositionally biased toward polar residues. T265 is modified (phosphothreonine). S428 carries the post-translational modification Phosphoserine. The interval S545–R569 is disordered. The span at E559–R569 shows a compositional bias: basic and acidic residues.

The chain is Endonuclease/exonuclease/phosphatase family domain-containing protein 1 (EEPD1) from Homo sapiens (Human).